Here is a 265-residue protein sequence, read N- to C-terminus: Sulfur carrier protein FdhD (265 aa).

The Cysteine persulfide intermediate role is filled by cysteine 107.

It belongs to the FdhD family.

Its subcellular location is the cytoplasm. Functionally, required for formate dehydrogenase (FDH) activity. Acts as a sulfur carrier protein that transfers sulfur from IscS to the molybdenum cofactor prior to its insertion into FDH. The sequence is that of Sulfur carrier protein FdhD from Staphylococcus aureus (strain JH9).